The primary structure comprises 361 residues: Large ribosomal subunit protein mL45 (361 aa).

The disordered stretch occupies residues 319–361; that stretch reads EPPKELSAGDAEVKQVDSVGEQSKEQLPLATPVESHTKPSLAI.

It belongs to the mitochondrion-specific ribosomal protein mL45 family.

The protein localises to the mitochondrion. This is Large ribosomal subunit protein mL45 (mRpL45) from Drosophila melanogaster (Fruit fly).